The sequence spans 1485 residues: ABC multidrug transporter I (1485 aa).

Disordered stretches follow at residues 1–57 and 75–111; these read MDEK…EEFS and KQIS…ALRG. Over residues 8–24 the composition is skewed to polar residues; the sequence is SESSNGSDVDSLSTASA. Asparagine 12 carries N-linked (GlcNAc...) asparagine glycosylation. Basic and acidic residues predominate over residues 85-95; that stretch reads GKTEDVERSDS. N-linked (GlcNAc...) asparagine glycosylation is found at asparagine 132, asparagine 335, and asparagine 451. An ABC transporter 1 domain is found at 163–411; sequence MHMLGYGKKG…FESLGFKERP (249 aa). Helical transmembrane passes span 522–542, 556–576, 600–620, 623–643, 664–684, 691–711, and 774–794; these read FAQT…GTVW, GGLL…ELVS, IAQI…FSII, FMCG…IIVL, YAMK…GYLI, EWLR…ALMV, and FGIM…HGET. An ABC transporter 2 domain is found at 846 to 1089; sequence FTWEDVCYDV…LLDYFRRNGA (244 aa). 882 to 889 serves as a coordination point for ATP; it reads GASGAGKT. 5 consecutive transmembrane segments (helical) span residues 1184–1204, 1211–1231, 1268–1288, 1299–1319, and 1325–1345; these read YGFT…LAFL, ASLQ…AIIL, LPYS…IPGF, FLMV…ISAL, and IASQ…GVAI. 2 N-linked (GlcNAc...) asparagine glycosylation sites follow: asparagine 1396 and asparagine 1418. Residues 1449-1469 traverse the membrane as a helical segment; the sequence is LGIFLAFIGSNLIILFLAVSF.

This sequence belongs to the ABC transporter superfamily. ABCG family. PDR (TC 3.A.1.205) subfamily.

The protein localises to the cell membrane. The catalysed reaction is fluconazole(in) + ATP + H2O = fluconazole(out) + ADP + phosphate + H(+). The efflux inhibitor FK506 does not impair the transport activity. ABC efflux transporter that confers resistance to fluconazole (FLC) but shows no resistance to other azoles. Is also able to transport rhodamine 6G (R-6G), a known substrate for many ABC transporters. In Aspergillus fumigatus (strain ATCC MYA-4609 / CBS 101355 / FGSC A1100 / Af293) (Neosartorya fumigata), this protein is ABC multidrug transporter I.